The primary structure comprises 608 residues: UvrABC system protein C (608 aa).

The region spanning 15–93 (HQPGVYRMYN…IKQYLPKYNV (79 aa)) is the GIY-YIG domain. Residues 203–238 (RQVIQTLVKQMESASQSLNFEKAAIIRDQIQAMRRV) form the UVR domain.

Belongs to the UvrC family. In terms of assembly, interacts with UvrB in an incision complex.

Its subcellular location is the cytoplasm. Its function is as follows. The UvrABC repair system catalyzes the recognition and processing of DNA lesions. UvrC both incises the 5' and 3' sides of the lesion. The N-terminal half is responsible for the 3' incision and the C-terminal half is responsible for the 5' incision. This is UvrABC system protein C from Aliivibrio fischeri (strain ATCC 700601 / ES114) (Vibrio fischeri).